The sequence spans 180 residues: Segregation and condensation protein B (180 aa).

Belongs to the ScpB family. As to quaternary structure, homodimer. Homodimerization may be required to stabilize the binding of ScpA to the Smc head domains. Component of a cohesin-like complex composed of ScpA, ScpB and the Smc homodimer, in which ScpA and ScpB bind to the head domain of Smc. The presence of the three proteins is required for the association of the complex with DNA.

It localises to the cytoplasm. Functionally, participates in chromosomal partition during cell division. May act via the formation of a condensin-like complex containing Smc and ScpA that pull DNA away from mid-cell into both cell halves. The sequence is that of Segregation and condensation protein B from Staphylococcus aureus (strain USA300).